A 75-amino-acid chain; its full sequence is Small ribosomal subunit protein bS18 (75 aa).

Belongs to the bacterial ribosomal protein bS18 family. As to quaternary structure, part of the 30S ribosomal subunit. Forms a tight heterodimer with protein bS6.

In terms of biological role, binds as a heterodimer with protein bS6 to the central domain of the 16S rRNA, where it helps stabilize the platform of the 30S subunit. The chain is Small ribosomal subunit protein bS18 from Shewanella amazonensis (strain ATCC BAA-1098 / SB2B).